Here is a 191-residue protein sequence, read N- to C-terminus: GTP-dependent dephospho-CoA kinase (191 aa).

GTP-binding residues include D46, D65, K67, and E122.

This sequence belongs to the GTP-dependent DPCK family.

The catalysed reaction is 3'-dephospho-CoA + GTP = GDP + CoA + H(+). It participates in cofactor biosynthesis; coenzyme A biosynthesis. In terms of biological role, catalyzes the GTP-dependent phosphorylation of the 3'-hydroxyl group of dephosphocoenzyme A to form coenzyme A (CoA). The polypeptide is GTP-dependent dephospho-CoA kinase (Methanopyrus kandleri (strain AV19 / DSM 6324 / JCM 9639 / NBRC 100938)).